Here is a 174-residue protein sequence, read N- to C-terminus: Guided entry of tail-anchored proteins factor 1 (174 aa).

The Lumenal segment spans residues 1–8; the sequence is MSASETDR. Residues 9–29 form a helical membrane-spanning segment; it reads WAWLLVLCFVFGCNVLRILLP. At 30-99 the chain is on the cytoplasmic side; it reads TLSSFISRVL…VKARTAQLAK (70 aa). Positions 39–94 form a coiled coil; that stretch reads LQKDAEQESQMRAEIQSMKQELSTVNMMDEFARYARLERKINKMTDKLKTHVKART. The tract at residues 39 to 97 is interaction with GET3/TRC40; sequence LQKDAEQESQMRAEIQSMKQELSTVNMMDEFARYARLERKINKMTDKLKTHVKARTAQL. Residues 100–120 form a helical membrane-spanning segment; sequence IKWFISVAFYVLQAALMISLI. Over 121-148 the chain is Lumenal; the sequence is WKYYSVPVAVVPSKWITPLDRLVAFPTR. The chain crosses the membrane as a helical span at residues 149–169; that stretch reads VAGGIGVTCWILVCNKVVAII. Residues 170–174 are Cytoplasmic-facing; sequence LHPFS.

This sequence belongs to the WRB/GET1 family. In terms of assembly, component of the Golgi to ER traffic (GET) complex, which is composed of GET1, CAMLG/GET2 and GET3. Within the complex, GET1 and CAMLG form a heterotetramer which is stabilized by phosphatidylinositol binding and which binds to the GET3 homodimer. Interacts with CAMLG/GET2 (via C-terminus). GET3 shows a higher affinity for CAMLG than for GET1.

The protein localises to the endoplasmic reticulum membrane. Functionally, required for the post-translational delivery of tail-anchored (TA) proteins to the endoplasmic reticulum. Together with CAMLG/GET2, acts as a membrane receptor for soluble GET3/TRC40, which recognizes and selectively binds the transmembrane domain of TA proteins in the cytosol. Required to ensure correct topology and ER insertion of CAMLG. The protein is Guided entry of tail-anchored proteins factor 1 of Rattus norvegicus (Rat).